Reading from the N-terminus, the 478-residue chain is DNA-directed RNA polymerase subunit alpha (478 aa).

Positions 1 to 341 (MNKKIQDFFL…LDCMRLLNYE (341 aa)) are alpha N-terminal domain (alpha-NTD). Residues 365–478 (RFYNSREDKT…KLGSRNEKNL (114 aa)) form an alpha C-terminal domain (alpha-CTD) region.

This sequence belongs to the RNA polymerase alpha chain family. In plastids the minimal PEP RNA polymerase catalytic core is composed of four subunits: alpha, beta, beta', and beta''. When a (nuclear-encoded) sigma factor is associated with the core the holoenzyme is formed, which can initiate transcription.

It is found in the plastid. The protein localises to the chloroplast. The enzyme catalyses RNA(n) + a ribonucleoside 5'-triphosphate = RNA(n+1) + diphosphate. In terms of biological role, DNA-dependent RNA polymerase catalyzes the transcription of DNA into RNA using the four ribonucleoside triphosphates as substrates. The polypeptide is DNA-directed RNA polymerase subunit alpha (rpoA) (Tetradesmus obliquus (Green alga)).